A 389-amino-acid chain; its full sequence is Succinate--CoA ligase [ADP-forming] subunit beta (389 aa).

The region spanning 9–244 (KEIFRSMGVA…LDEEDPKEIE (236 aa)) is the ATP-grasp domain. Residues Lys46, 53–55 (GRG), Glu99, Cys102, and Glu107 each bind ATP. Residues Asn199 and Asp213 each coordinate Mg(2+). Substrate-binding positions include Asn264 and 321–323 (GIM).

It belongs to the succinate/malate CoA ligase beta subunit family. Heterotetramer of two alpha and two beta subunits. Mg(2+) is required as a cofactor.

It catalyses the reaction succinate + ATP + CoA = succinyl-CoA + ADP + phosphate. It carries out the reaction GTP + succinate + CoA = succinyl-CoA + GDP + phosphate. The protein operates within carbohydrate metabolism; tricarboxylic acid cycle; succinate from succinyl-CoA (ligase route): step 1/1. Functionally, succinyl-CoA synthetase functions in the citric acid cycle (TCA), coupling the hydrolysis of succinyl-CoA to the synthesis of either ATP or GTP and thus represents the only step of substrate-level phosphorylation in the TCA. The beta subunit provides nucleotide specificity of the enzyme and binds the substrate succinate, while the binding sites for coenzyme A and phosphate are found in the alpha subunit. In Macrococcus caseolyticus (strain JCSC5402) (Macrococcoides caseolyticum), this protein is Succinate--CoA ligase [ADP-forming] subunit beta.